Reading from the N-terminus, the 449-residue chain is Glutamyl-tRNA reductase (449 aa).

Residues 58–61 (TCNR), Ser-121, 126–128 (ETQ), and Gln-132 contribute to the substrate site. The active-site Nucleophile is Cys-59. 203–208 (GLGEMA) contributes to the NADP(+) binding site.

This sequence belongs to the glutamyl-tRNA reductase family. Homodimer.

The catalysed reaction is (S)-4-amino-5-oxopentanoate + tRNA(Glu) + NADP(+) = L-glutamyl-tRNA(Glu) + NADPH + H(+). Its pathway is porphyrin-containing compound metabolism; protoporphyrin-IX biosynthesis; 5-aminolevulinate from L-glutamyl-tRNA(Glu): step 1/2. Its function is as follows. Catalyzes the NADPH-dependent reduction of glutamyl-tRNA(Glu) to glutamate 1-semialdehyde (GSA). In Helicobacter pylori (strain P12), this protein is Glutamyl-tRNA reductase.